The sequence spans 200 residues: Recombination protein RecR (200 aa).

A C4-type zinc finger spans residues 58 to 75; the sequence is CSNCFCLKISQTSPCNFC. The Toprim domain occupies 82–177; the sequence is SSLCIVATPK…KISRLALGMP (96 aa).

The protein belongs to the RecR family.

Its function is as follows. May play a role in DNA repair. It seems to be involved in an RecBC-independent recombinational process of DNA repair. It may act with RecF and RecO. The chain is Recombination protein RecR from Chlamydia trachomatis serovar D (strain ATCC VR-885 / DSM 19411 / UW-3/Cx).